A 1106-amino-acid chain; its full sequence is Probable LRR receptor-like serine/threonine-protein kinase At1g74360 (1106 aa).

The signal sequence occupies residues 1–34; that stretch reads MTMVTRVIMTDDDSQSLCFLCFLLFFFITAIAVA. The Extracellular segment spans residues 35 to 736; sequence GDSLDSDREV…PRTLLLIWIS (702 aa). 7 LRR repeats span residues 86–109, 110–134, 136–156, 157–182, 184–204, 205–226, and 227–250; these read RSRVTGINLTDSTISGPLFKNFSA, LTELTYLDLSRNTIEGEIPDDLSRC, NLKHLNLSHNILEGELSLPGL, SNLEVLDLSLNRITGDIQSSFPLFCN, LVVANLSTNNFTGRIDDIFNG, CRNLKYVDFSSNRFSGEVWTGF, and GRLVEFSVADNHLSGNISASMFRG. 2 N-linked (GlcNAc...) asparagine glycosylation sites follow: Asn93 and Asn106. Asn141 carries N-linked (GlcNAc...) asparagine glycosylation. N-linked (GlcNAc...) asparagine glycans are attached at residues Asn188 and Asn193. Asn242 and Asn251 each carry an N-linked (GlcNAc...) asparagine glycan. LRR repeat units lie at residues 252 to 275, 276 to 299, 300 to 323, 325 to 346, 348 to 371, 372 to 396, 398 to 419, 420 to 443, 445 to 468, 470 to 492, 566 to 593, 594 to 617, 619 to 640, 641 to 664, and 666 to 690; these read CTLQMLDLSGNAFGGEFPGQVSNC, QNLNVLNLWGNKFTGNIPAEIGSI, SSLKGLYLGNNTFSRDIPETLLNL, NLVFLDLSRNKFGGDIQEIFGR, TQVKYLVLHANSYVGGINSSNILK, LPNLSRLDLGYNNFSGQLPTEISQI, SLKFLILAYNNFSGDIPQEYGN, MPGLQALDLSFNKLTGSIPASFGK, TSLLWLMLANNSLSGEIPREIGNC, SLLWFNVANNQLSGRFHPELTRM, VRTLKISAYLQLSGNKFSGEIPASISQM, DRLSTLHLGFNEFEGKLPPEIGQL, LAFLNLTRNNFSGEIPQEIGNL, KCLQNLDLSFNNFSGNFPTSLNDL, and ELSKFNISYNPFISGAIPTTGQVAT. N-linked (GlcNAc...) asparagine glycans are attached at residues Asn309 and Asn322. Asn365, Asn374, Asn384, and Asn408 each carry an N-linked (GlcNAc...) asparagine glycan. N-linked (GlcNAc...) asparagine glycans are attached at residues Asn454 and Asn467. 6 N-linked (GlcNAc...) asparagine glycosylation sites follow: Asn623, Asn628, Asn652, Asn671, Asn709, and Asn713. A helical membrane pass occupies residues 737–757; the sequence is LALALAFIACLVVSGIVLMVV. Topologically, residues 758–1106 are cytoplasmic; sequence KASREAEIDL…GLSSQGYIEM (349 aa). 2 positions are modified to phosphothreonine: Thr803 and Thr811. The region spanning 814–1095 is the Protein kinase domain; it reads FSEERVVGRG…VKISGKAELF (282 aa). ATP-binding positions include 820–828 and Lys842; that span reads VGRGGYGTV. The active-site Proton acceptor is Asp941. Tyr983 carries the post-translational modification Phosphotyrosine. Thr991 is modified (phosphothreonine).

Belongs to the protein kinase superfamily. Ser/Thr protein kinase family.

Its subcellular location is the mitochondrion membrane. It catalyses the reaction L-seryl-[protein] + ATP = O-phospho-L-seryl-[protein] + ADP + H(+). The catalysed reaction is L-threonyl-[protein] + ATP = O-phospho-L-threonyl-[protein] + ADP + H(+). In Arabidopsis thaliana (Mouse-ear cress), this protein is Probable LRR receptor-like serine/threonine-protein kinase At1g74360.